We begin with the raw amino-acid sequence, 192 residues long: Thymidine kinase (192 aa).

ATP-binding positions include 9-16 (STMNAGKS) and 87-90 (DEAQ). Residue glutamate 88 is the Proton acceptor of the active site. Cysteine 145, cysteine 147, cysteine 182, and histidine 185 together coordinate Zn(2+).

This sequence belongs to the thymidine kinase family. As to quaternary structure, homotetramer.

Its subcellular location is the cytoplasm. The enzyme catalyses thymidine + ATP = dTMP + ADP + H(+). The chain is Thymidine kinase from Pasteurella multocida (strain Pm70).